A 654-amino-acid polypeptide reads, in one-letter code: Probable protein phosphatase 2C 23 (654 aa).

The interval 11 to 30 (CLTGGAGRNKKPELSILEPD) is disordered. The residue at position 147 (S147) is a Phosphoserine. The 403-residue stretch at 243 to 645 (DVSLESQNLQ…DDVSIVVISL (403 aa)) folds into the PPM-type phosphatase domain. 2 residues coordinate Mn(2+): D280 and G281. Residues 309 to 336 (DDPKTDAKSSDEADVENRDSSSEKKSKN) form a disordered region. Residues D573 and D636 each coordinate Mn(2+).

It belongs to the PP2C family. Mg(2+) is required as a cofactor. Mn(2+) serves as cofactor. In terms of tissue distribution, expressed in seedlings, roots, leaves, stems, young inflorescences, flowers and siliques.

It is found in the nucleus. It carries out the reaction O-phospho-L-seryl-[protein] + H2O = L-seryl-[protein] + phosphate. The catalysed reaction is O-phospho-L-threonyl-[protein] + H2O = L-threonyl-[protein] + phosphate. Involved in leaf development regulation. In Arabidopsis thaliana (Mouse-ear cress), this protein is Probable protein phosphatase 2C 23 (PLL4).